A 317-amino-acid polypeptide reads, in one-letter code: Ribosomal protein L11 methyltransferase (317 aa).

Thr139, Gly162, Asp184, and Asn226 together coordinate S-adenosyl-L-methionine. The tract at residues Glu274–Gly297 is disordered.

This sequence belongs to the methyltransferase superfamily. PrmA family.

It localises to the cytoplasm. It carries out the reaction L-lysyl-[protein] + 3 S-adenosyl-L-methionine = N(6),N(6),N(6)-trimethyl-L-lysyl-[protein] + 3 S-adenosyl-L-homocysteine + 3 H(+). Methylates ribosomal protein L11. The chain is Ribosomal protein L11 methyltransferase from Sorangium cellulosum (strain So ce56) (Polyangium cellulosum (strain So ce56)).